The chain runs to 408 residues: Energy-coupling factor transporter ATP-binding protein EcfA1 (408 aa).

The ABC transporter domain occupies 140-374 (IEIKNLSFKY…KEFLRNIQLD (235 aa)). 174–181 (GHNGSGKS) contributes to the ATP binding site.

This sequence belongs to the ABC transporter superfamily. Energy-coupling factor EcfA family. In terms of assembly, forms a stable energy-coupling factor (ECF) transporter complex composed of 2 membrane-embedded substrate-binding proteins (S component), 2 ATP-binding proteins (A component) and 2 transmembrane proteins (T component).

It localises to the cell membrane. ATP-binding (A) component of a common energy-coupling factor (ECF) ABC-transporter complex. Unlike classic ABC transporters this ECF transporter provides the energy necessary to transport a number of different substrates. The chain is Energy-coupling factor transporter ATP-binding protein EcfA1 from Mycoplasma capricolum subsp. capricolum (strain California kid / ATCC 27343 / NCTC 10154).